Here is a 478-residue protein sequence, read N- to C-terminus: 9-divinyl ether synthase (478 aa).

Heme is bound at residue cysteine 431.

This sequence belongs to the cytochrome P450 family. 9-divinyl ether synthase subfamily.

It catalyses the reaction (9S)-hydroperoxy-(10E,12Z)-octadecadienoate = colneleate + H2O. Functionally, involved in the biosynthesis of the anti-fungal toxins colneleic acid and colnelenic acid. This chain is 9-divinyl ether synthase (DES), found in Capsicum annuum (Capsicum pepper).